The primary structure comprises 124 residues: Small ribosomal subunit protein uS12 (124 aa).

The residue at position 89 (aspartate 89) is a 3-methylthioaspartic acid.

This sequence belongs to the universal ribosomal protein uS12 family. In terms of assembly, part of the 30S ribosomal subunit. Contacts proteins S8 and S17. May interact with IF1 in the 30S initiation complex.

With S4 and S5 plays an important role in translational accuracy. Its function is as follows. Interacts with and stabilizes bases of the 16S rRNA that are involved in tRNA selection in the A site and with the mRNA backbone. Located at the interface of the 30S and 50S subunits, it traverses the body of the 30S subunit contacting proteins on the other side and probably holding the rRNA structure together. The combined cluster of proteins S8, S12 and S17 appears to hold together the shoulder and platform of the 30S subunit. The sequence is that of Small ribosomal subunit protein uS12 from Edwardsiella ictaluri (strain 93-146).